The chain runs to 770 residues: Semaphorin-4F (770 aa).

The signal sequence occupies residues 1–34; that stretch reads MPASAARPRPGPGQPTASPFPLLLLAVLSGPVSG. Residues 35–659 lie on the Extracellular side of the membrane; it reads RVPRSVPRTS…RDAPSRAHTV (625 aa). The 469-residue stretch at 42–510 folds into the Sema domain; that stretch reads RTSLPISEAD…SRTEVTQVNT (469 aa). The N-linked (GlcNAc...) asparagine glycan is linked to N64. A disulfide bridge connects residues C112 and C122. Residue N133 is glycosylated (N-linked (GlcNAc...) asparagine). 3 disulfide bridges follow: C140–C149, C273–C384, and C297–C343. N509 is a glycosylation site (N-linked (GlcNAc...) asparagine). A PSI domain is found at 512–563; the sequence is NCGRLQSCSECILAQDPVCAWSFRLDECVAHAGEHRGLVQDIESADVSSLCP. Cystine bridges form between C513-C530, C522-C539, and C587-C628. The 56-residue stretch at 580-635 folds into the Ig-like C2-type domain; sequence AAHVVLPCSPSSAWASCVWHQPSGVTALTPRRDGLEVVVTPGAMGAYACECQEGGA. Residues 660 to 680 form a helical membrane-spanning segment; it reads GAGLAGFFLGILAASLTLILI. At 681 to 770 the chain is on the cytoplasmic side; that stretch reads GRRQQRRRQR…PLATCDETSI (90 aa). The segment at 696–725 is disordered; sequence DKVGLDLGAPPSGTTSYSQDPPSPSPEDER. Phosphoserine occurs at positions 718 and 720. The PDZ-binding motif lies at 768-770; that stretch reads TSI.

Belongs to the semaphorin family. As to quaternary structure, interacts (via PDZ-binding motif) with DLG4/SAP90 (via PDZ domain 2); this interaction may promote translocation of DLG4/SAP90 to the membrane.

It localises to the cell membrane. Its subcellular location is the postsynaptic density. It is found in the perikaryon. The protein localises to the cell projection. The protein resides in the dendrite. Functionally, probable cell surface receptor that regulates oligodendroglial precursor cell migration. Might also regulate differentiation of oligodendroglial precursor cells. Has growth cone collapse activity against retinal ganglion-cell axons. The chain is Semaphorin-4F (SEMA4F) from Homo sapiens (Human).